Consider the following 584-residue polypeptide: 2-succinyl-5-enolpyruvyl-6-hydroxy-3-cyclohexene-1-carboxylate synthase (584 aa).

It belongs to the TPP enzyme family. MenD subfamily. Homodimer. It depends on Mg(2+) as a cofactor. The cofactor is Mn(2+). Thiamine diphosphate is required as a cofactor.

The catalysed reaction is isochorismate + 2-oxoglutarate + H(+) = 5-enolpyruvoyl-6-hydroxy-2-succinyl-cyclohex-3-ene-1-carboxylate + CO2. Its pathway is quinol/quinone metabolism; 1,4-dihydroxy-2-naphthoate biosynthesis; 1,4-dihydroxy-2-naphthoate from chorismate: step 2/7. It participates in quinol/quinone metabolism; menaquinone biosynthesis. Catalyzes the thiamine diphosphate-dependent decarboxylation of 2-oxoglutarate and the subsequent addition of the resulting succinic semialdehyde-thiamine pyrophosphate anion to isochorismate to yield 2-succinyl-5-enolpyruvyl-6-hydroxy-3-cyclohexene-1-carboxylate (SEPHCHC). The protein is 2-succinyl-5-enolpyruvyl-6-hydroxy-3-cyclohexene-1-carboxylate synthase of Bacillus cereus (strain ATCC 14579 / DSM 31 / CCUG 7414 / JCM 2152 / NBRC 15305 / NCIMB 9373 / NCTC 2599 / NRRL B-3711).